The following is a 202-amino-acid chain: Transmembrane 4 L6 family member 1 (202 aa).

At 1-9 (MCYGKCARC) the chain is on the cytoplasmic side. Residues 10–30 (IGHSLVGLALLCIAANILLYF) traverse the membrane as a helical segment. At 31–49 (PNGETKYASENHLSRFVWF) the chain is on the extracellular side. The helical transmembrane segment at 50-70 (FSGIVGGGLLMLLPAFVFIGL) threads the bilayer. At 71-93 (EQDDCCGCCGHENCGKRCAMLSS) the chain is on the cytoplasmic side. Residues 94–114 (VLAALIGIAGSGYCVIVAALG) traverse the membrane as a helical segment. Residues 115-161 (LAEGPLCLDSLGQWNYTFASTEGQYLLDTSTWSECTEPKHIVEWNVS) lie on the Extracellular side of the membrane. N129 and N159 each carry an N-linked (GlcNAc...) asparagine glycan. Residues 162-182 (LFSILLALGGIEFILCLIQVI) traverse the membrane as a helical segment. Residues 183–202 (NGVLGGICGFCCSHQQQYDC) lie on the Cytoplasmic side of the membrane.

This sequence belongs to the L6 tetraspanin family. As to quaternary structure, present in high molecular weight complexes in tumor cells. Interacts with SDCBP2. As to expression, highly expressed in lung, breast, colon and ovarian carcinomas. It is also present on some normal cells, endothelial cells in particular.

It is found in the membrane. The sequence is that of Transmembrane 4 L6 family member 1 (TM4SF1) from Homo sapiens (Human).